Reading from the N-terminus, the 185-residue chain is Peptide deformylase (185 aa).

Positions 112 and 155 each coordinate Fe cation. Residue glutamate 156 is part of the active site. Histidine 159 contacts Fe cation.

This sequence belongs to the polypeptide deformylase family. The cofactor is Fe(2+).

It carries out the reaction N-terminal N-formyl-L-methionyl-[peptide] + H2O = N-terminal L-methionyl-[peptide] + formate. In terms of biological role, removes the formyl group from the N-terminal Met of newly synthesized proteins. Requires at least a dipeptide for an efficient rate of reaction. N-terminal L-methionine is a prerequisite for activity but the enzyme has broad specificity at other positions. In Latilactobacillus sakei subsp. sakei (strain 23K) (Lactobacillus sakei subsp. sakei), this protein is Peptide deformylase.